Reading from the N-terminus, the 160-residue chain is Type IV major fimbrial protein FimA (160 aa).

Residues 1 to 7 constitute a propeptide, leader sequence; it reads MKSLQKG. N-methylphenylalanine is present on F8. A helical membrane pass occupies residues 8–28; sequence FTLIELMIVVAIIGILAAIAI.

The protein belongs to the N-Me-Phe pilin family. The pili are polar flexible filaments of about 5.4 nanometers diameter and 2.5 micrometers average length; they consist of only a single polypeptide chain arranged in a helical configuration of five subunits per turn in the assembled pilus.

The protein resides in the fimbrium. It is found in the membrane. Its function is as follows. Major component of the type IV fimbriae that plays an essential role in twitching motility, natural transformation, and protease secretion. This Dichelobacter nodosus (Bacteroides nodosus) protein is Type IV major fimbrial protein FimA (fimA).